Reading from the N-terminus, the 159-residue chain is 17 kDa surface antigen (159 aa).

A signal peptide spans 1 to 19; it reads MKIISKIIVILLAASMLQA. A lipid anchor (N-palmitoyl cysteine) is attached at Cys-20. Cys-20 is lipidated: S-diacylglycerol cysteine.

This sequence belongs to the rickettsiale 17 kDa surface antigen family.

The protein resides in the cell outer membrane. This chain is 17 kDa surface antigen (omp), found in Rickettsia bellii.